Here is a 169-residue protein sequence, read N- to C-terminus: NADH dehydrogenase [ubiquinone] 1 alpha subcomplex assembly factor 2 (169 aa).

The interval 116–169 (TSEELLPPPVQTQIKGHASAPYFGKEEPSVAPSSTGKTFQPGSWMPRDGKSHNQ) is disordered. Serine 134 is subject to Phosphoserine. A compositionally biased stretch (polar residues) spans 146–156 (APSSTGKTFQP).

This sequence belongs to the complex I NDUFA12 subunit family. In terms of assembly, interacts with ARMC9. In terms of tissue distribution, highly expressed in ESCC cells. Also expressed in heart, skeletal muscle, liver, and in fibroblasts.

It localises to the mitochondrion. Its function is as follows. Acts as a molecular chaperone for mitochondrial complex I assembly. Complex I functions in the transfer of electrons from NADH to the respiratory chain. The immediate electron acceptor for the enzyme is believed to be ubiquinone. Is involved in the initial steps of cilia formation, including removal of CP110 from the mother centrioles, docking of membrane vesicles to the mother centrioles, and establishment of the transition zone. The sequence is that of NADH dehydrogenase [ubiquinone] 1 alpha subcomplex assembly factor 2 (NDUFAF2) from Homo sapiens (Human).